The following is a 309-amino-acid chain: Metal ABC transporter substrate-binding lipoprotein SsaB (309 aa).

Positions 1–19 (MKKLGFLSLLLLAVCTLFA) are cleaved as a signal peptide. C20 carries the N-palmitoyl cysteine lipid modification. C20 carries the S-diacylglycerol cysteine lipid modification. Residues H67, H139, E205, and D280 each contribute to the a divalent metal cation site.

It belongs to the bacterial solute-binding protein 9 family. Lipoprotein receptor antigen (Lrai) subfamily. In terms of assembly, homodimer and homotrimer.

Its subcellular location is the cell membrane. Functionally, part of an ATP-binding cassette (ABC) transport system involved in metal import. Binds a metal with high affinity and specificity and delivers it to the membrane permease for translocation into the cytoplasm. Also acts as an adhesin which is involved on adherence to extracellular matrix. It is an important factor in the pathogenesis and infection. May contribute to the formation and accumulation of dental plaque. In Streptococcus sanguinis, this protein is Metal ABC transporter substrate-binding lipoprotein SsaB (ssaB).